The following is a 207-amino-acid chain: Ribosomal RNA small subunit methyltransferase G (207 aa).

Residues glycine 74, leucine 79, 125-126 (VE), and arginine 140 contribute to the S-adenosyl-L-methionine site.

This sequence belongs to the methyltransferase superfamily. RNA methyltransferase RsmG family.

The protein localises to the cytoplasm. It carries out the reaction guanosine(527) in 16S rRNA + S-adenosyl-L-methionine = N(7)-methylguanosine(527) in 16S rRNA + S-adenosyl-L-homocysteine. In terms of biological role, specifically methylates the N7 position of guanine in position 527 of 16S rRNA. This Shewanella halifaxensis (strain HAW-EB4) protein is Ribosomal RNA small subunit methyltransferase G.